Here is a 1027-residue protein sequence, read N- to C-terminus: INO80 complex subunit D (1027 aa).

Residue K87 forms a Glycyl lysine isopeptide (Lys-Gly) (interchain with G-Cter in SUMO2) linkage. S132 carries the post-translational modification Phosphoserine. Disordered stretches follow at residues H193 to P278, R519 to P574, R813 to S850, L914 to K969, and Q982 to N1027. Residues S201–S216 show a composition bias toward low complexity. Residues V229 to Q257 are compositionally biased toward polar residues. A compositionally biased stretch (basic residues) spans K525–Q559. Residues L914–P932 are compositionally biased toward low complexity. The span at V937 to S954 shows a compositional bias: polar residues. Positions A1001–N1027 are enriched in low complexity.

It belongs to the INO80D family. Component of the chromatin remodeling INO80 complex; specifically part of a complex module associated with the N-terminus of INO80.

It localises to the nucleus. Putative regulatory component of the chromatin remodeling INO80 complex which is involved in transcriptional regulation, DNA replication and probably DNA repair. The sequence is that of INO80 complex subunit D from Homo sapiens (Human).